Here is a 271-residue protein sequence, read N- to C-terminus: MASENMTPQEYIGHHLNNLQLDLRTFSLVDPQNPPATFWTLNIDSMFFSVVLGLLFLVMFRSVAKKATSGVPGKFQTAIELIVGFVHGSVKDMYHGKSKLIAPLALTIFVWVFLMNLMDLLPIDLLPYIAEHWLGLPATRVVPSADVNITLSMALGVFILILFYSIKMKGIGGFAKELTLQPFNHWAFIPVNLILEGVSLLSKPVSLGLRLFGNMYAGELIFILIAGLLPWWSQWILNVPWAIFHILIITLQAFIFMVLTIVYLSMASEEH.

5 helical membrane-spanning segments follow: residues phenylalanine 38–valine 58, leucine 100–leucine 120, aspartate 146–isoleucine 166, leucine 220–proline 240, and alanine 242–valine 262.

The protein belongs to the ATPase A chain family. F-type ATPases have 2 components, CF(1) - the catalytic core - and CF(0) - the membrane proton channel. CF(1) has five subunits: alpha(3), beta(3), gamma(1), delta(1), epsilon(1). CF(0) has three main subunits: a(1), b(2) and c(9-12). The alpha and beta chains form an alternating ring which encloses part of the gamma chain. CF(1) is attached to CF(0) by a central stalk formed by the gamma and epsilon chains, while a peripheral stalk is formed by the delta and b chains.

It localises to the cell inner membrane. Functionally, key component of the proton channel; it plays a direct role in the translocation of protons across the membrane. The sequence is that of ATP synthase subunit a from Salmonella choleraesuis (strain SC-B67).